The following is a 129-amino-acid chain: uncharacterized protein (129 aa).

2 consecutive transmembrane segments (helical) span residues 4-24 (FKFL…ILII) and 37-57 (VISL…DLSI).

This sequence to B.burgdorferi BBF20.

The protein localises to the cell membrane. This is an uncharacterized protein from Borreliella burgdorferi (strain ATCC 35210 / DSM 4680 / CIP 102532 / B31) (Borrelia burgdorferi).